Here is a 497-residue protein sequence, read N- to C-terminus: Indoleacetaldoxime dehydratase (497 aa).

The chain crosses the membrane as a helical span at residues 2-20; the sequence is EMILSISLCLTTLITLLLL. Heme is bound at residue cysteine 439.

This sequence belongs to the cytochrome P450 family.

It localises to the membrane. It carries out the reaction (E)-(indol-3-yl)acetaldehyde oxime = (indol-3-yl)acetonitrile + H2O. Its function is as follows. Involved in the biosynthesis of the indole-derived phytoalexin camalexin. Catalyzes the conversion of indole-3-acetaldoxime to indole-3-acetonitrile. Required for resistance to A.brassicicola and B.cinerea. The sequence is that of Indoleacetaldoxime dehydratase (CYP71A13) from Arabidopsis thaliana (Mouse-ear cress).